We begin with the raw amino-acid sequence, 525 residues long: Bifunctional purine biosynthesis protein PurH (525 aa).

The MGS-like domain maps to 1 to 148 (MPSNNLIKNA…KNYKNVIVIV (148 aa)).

The protein belongs to the PurH family.

It catalyses the reaction (6R)-10-formyltetrahydrofolate + 5-amino-1-(5-phospho-beta-D-ribosyl)imidazole-4-carboxamide = 5-formamido-1-(5-phospho-D-ribosyl)imidazole-4-carboxamide + (6S)-5,6,7,8-tetrahydrofolate. It carries out the reaction IMP + H2O = 5-formamido-1-(5-phospho-D-ribosyl)imidazole-4-carboxamide. It participates in purine metabolism; IMP biosynthesis via de novo pathway; 5-formamido-1-(5-phospho-D-ribosyl)imidazole-4-carboxamide from 5-amino-1-(5-phospho-D-ribosyl)imidazole-4-carboxamide (10-formyl THF route): step 1/1. Its pathway is purine metabolism; IMP biosynthesis via de novo pathway; IMP from 5-formamido-1-(5-phospho-D-ribosyl)imidazole-4-carboxamide: step 1/1. This Buchnera aphidicola subsp. Acyrthosiphon pisum (strain 5A) protein is Bifunctional purine biosynthesis protein PurH.